The following is a 559-amino-acid chain: Glycerol kinase (559 aa).

Thr20 is an ADP binding site. Residues Thr20, Ser21, and Ser22 each contribute to the ATP site. Residue Thr20 coordinates sn-glycerol 3-phosphate. Arg24 contacts ADP. Residues Arg94, Glu95, and Tyr148 each contribute to the sn-glycerol 3-phosphate site. Residues Arg94, Glu95, and Tyr148 each contribute to the glycerol site. Beta-D-fructose 1,6-bisphosphate is bound at residue Gly252. Asp265 lines the sn-glycerol 3-phosphate pocket. Residues Asp265 and Gln266 each coordinate glycerol. Positions 287, 332, 433, and 437 each coordinate ADP. 3 residues coordinate ATP: Thr287, Gly332, and Gly433. Position 501 (Glu501) interacts with Zn(2+). The chain crosses the membrane as a helical span at residues 532 to 552 (IFCSLPLGFFIVSSMVMLIGA).

Belongs to the FGGY kinase family.

It is found in the mitochondrion outer membrane. Its subcellular location is the nucleus. It localises to the cytoplasm. The protein localises to the cytosol. It carries out the reaction glycerol + ATP = sn-glycerol 3-phosphate + ADP + H(+). It participates in polyol metabolism; glycerol degradation via glycerol kinase pathway; sn-glycerol 3-phosphate from glycerol: step 1/1. Functionally, kinase that plays a key role in glycerol metabolism, catalyzing its phosphorylation to produce sn-glycerol 3-phosphate. Sn-glycerol 3-phosphate is a crucial intermediate in various metabolic pathways, such as the synthesis of glycerolipids and triglycerides, glycogenesis, glycolysis and gluconeogenesis. In Rattus norvegicus (Rat), this protein is Glycerol kinase.